Consider the following 135-residue polypeptide: Large ribosomal subunit protein uL15 (135 aa).

The interval 21-66 (VGRGQGSGMGKTATRGGKGQTARTGYKAKRGFEGGQQPLQRRLPKI) is disordered.

The protein belongs to the universal ribosomal protein uL15 family. Part of the 50S ribosomal subunit.

Functionally, binds to the 23S rRNA. This chain is Large ribosomal subunit protein uL15, found in Helicobacter pylori (strain HPAG1).